The chain runs to 281 residues: Undecaprenyl-diphosphatase (281 aa).

8 consecutive transmembrane segments (helical) span residues 2–22, 46–66, 93–113, 115–135, 152–172, 190–210, 228–248, and 259–279; these read FDLI…FLPV, AFSS…VIQL, VIVG…FMDA, LMNF…FIVI, ITFK…VPGT, FVAA…VTFL, IVML…IKFM, and VFGY…ILGI.

Belongs to the UppP family.

It is found in the cell membrane. The enzyme catalyses di-trans,octa-cis-undecaprenyl diphosphate + H2O = di-trans,octa-cis-undecaprenyl phosphate + phosphate + H(+). Catalyzes the dephosphorylation of undecaprenyl diphosphate (UPP). Confers resistance to bacitracin. The protein is Undecaprenyl-diphosphatase of Leuconostoc mesenteroides subsp. mesenteroides (strain ATCC 8293 / DSM 20343 / BCRC 11652 / CCM 1803 / JCM 6124 / NCDO 523 / NBRC 100496 / NCIMB 8023 / NCTC 12954 / NRRL B-1118 / 37Y).